Consider the following 60-residue polypeptide: Small integral membrane protein 3 (60 aa).

A helical transmembrane segment spans residues 20-40 (IWAIVLIILATVVIMTSLFLC).

Its subcellular location is the membrane. This Rattus norvegicus (Rat) protein is Small integral membrane protein 3 (Smim3).